An 845-amino-acid polypeptide reads, in one-letter code: MPLSYQHFLKLLLLDDGTEAGPLEEELPRLADADLNRRVAEDLNLGNLNVSIPWTHKVGNFTGLYSHTVPIFNPEWQTPSFPKIHLQEDIIDRCQQFVGPLTVNEKRRLKLIMPARFYPNSTKYLPLDKGIKPYYPEHVVNHYFQARHYLHTLWKAGILYKRETTRSASFCGSPYSWEQELHHGRLVTKTSQRHGDKSVCSQPSGILSRSSVGPCIRSQFKQSRLGLQPHQGPLATSQSGRSGSIWARVHPSTRRCSGVEPSGSRHIDYSASSTSSCLRQSAVRKAAYSHLSTSKRQSSSGHKVEFPSFPPSSARSQSQGPVFSCWWLQFRNSKPCSEYCLSHLVNLLEDWGPCTDHGEHHIRIPRTPARVTGGVFLVDKNPHNTAESRLVVDFSQFSRGITRVSWPKFAVPNLQSLTNLLSSNLSWLSLDVSAAFYHIPLHPAAMPHLLIGSSGLSRYVARLSSNSRIHNHQYGTLQNLHDSCSRQLYVSLMLLYKTYGRKLHLYSHPIILGFRKIPMGVGLSPFLLAQFTSAICSVVRRAFPHCLAFSYMDDVVLGAKTVQHLESLYTAVTNFLLSLGIHLNPTKTKRWGYSLNFMGYIIGCWGALPQDHIVQKIKDCFRKLPVNRPIDWKVCQRIVGLLGFAAPFTQCGYPALMPLYACIQAKQAFTFSPTYKAFLSKQYMNLYPVARQRPGLCQVFADATPTGWGLAMGHQRMRGTFVAPLPIHTAELLAACFARSRSGAKLIGTDNSVVLSRKYTSFPWLLGCTANWILRGTSFVYVPSALNPADDPSRGRLGLYRPLLRLPFRPTTGRTSLYAVSPSVPSHLPDRVHFASPLHVAWRPP.

A terminal protein domain (TP) region spans residues 1–179; it reads MPLSYQHFLK…FCGSPYSWEQ (179 aa). Residues 180-348 form a spacer region; the sequence is ELHHGRLVTK…YCLSHLVNLL (169 aa). 2 disordered regions span residues 188-211 and 288-317; these read TKTS…SRSS and YSHL…ARSQ. Composition is skewed to polar residues over residues 199–211 and 290–301; these read VCSQ…SRSS and HLSTSKRQSSSG. The tract at residues 349–692 is polymerase/reverse transcriptase domain (RT); it reads EDWGPCTDHG…YMNLYPVARQ (344 aa). The Reverse transcriptase domain maps to 359–602; it reads EHHIRIPRTP…YSLNFMGYII (244 aa). Mg(2+)-binding residues include D431, D553, and D554.

Belongs to the hepadnaviridae P protein family.

It catalyses the reaction DNA(n) + a 2'-deoxyribonucleoside 5'-triphosphate = DNA(n+1) + diphosphate. The enzyme catalyses Endonucleolytic cleavage to 5'-phosphomonoester.. Its activity is regulated as follows. Activated by host HSP70 and HSP40 in vitro to be able to bind the epsilon loop of the pgRNA. Because deletion of the RNase H region renders the protein partly chaperone-independent, the chaperones may be needed indirectly to relieve occlusion of the RNA-binding site by this domain. Inhibited by several reverse-transcriptase inhibitors: Lamivudine, Adefovir and Entecavir. Multifunctional enzyme that converts the viral RNA genome into dsDNA in viral cytoplasmic capsids. This enzyme displays a DNA polymerase activity that can copy either DNA or RNA templates, and a ribonuclease H (RNase H) activity that cleaves the RNA strand of RNA-DNA heteroduplexes in a partially processive 3'- to 5'-endonucleasic mode. Neo-synthesized pregenomic RNA (pgRNA) are encapsidated together with the P protein, and reverse-transcribed inside the nucleocapsid. Initiation of reverse-transcription occurs first by binding the epsilon loop on the pgRNA genome, and is initiated by protein priming, thereby the 5'-end of (-)DNA is covalently linked to P protein. Partial (+)DNA is synthesized from the (-)DNA template and generates the relaxed circular DNA (RC-DNA) genome. After budding and infection, the RC-DNA migrates in the nucleus, and is converted into a plasmid-like covalently closed circular DNA (cccDNA). The activity of P protein does not seem to be necessary for cccDNA generation, and is presumably released from (+)DNA by host nuclear DNA repair machinery. This chain is Protein P, found in Homo sapiens (Human).